The chain runs to 443 residues: 3-isopropylmalate dehydratase large subunit (443 aa).

[4Fe-4S] cluster contacts are provided by C347, C407, and C410.

This sequence belongs to the aconitase/IPM isomerase family. LeuC type 1 subfamily. In terms of assembly, heterodimer of LeuC and LeuD. Requires [4Fe-4S] cluster as cofactor.

The catalysed reaction is (2R,3S)-3-isopropylmalate = (2S)-2-isopropylmalate. The protein operates within amino-acid biosynthesis; L-leucine biosynthesis; L-leucine from 3-methyl-2-oxobutanoate: step 2/4. Its function is as follows. Catalyzes the isomerization between 2-isopropylmalate and 3-isopropylmalate, via the formation of 2-isopropylmaleate. The chain is 3-isopropylmalate dehydratase large subunit from Buchnera aphidicola subsp. Uroleucon obscurum.